Consider the following 330-residue polypeptide: Ketol-acid reductoisomerase (NADP(+)) (330 aa).

The region spanning 1-181 (MNVYYEKDAD…GGTKAGVIET (181 aa)) is the KARI N-terminal Rossmann domain. Residues 24 to 27 (YGSQ), R47, S50, S52, and 82 to 85 (DQNQ) contribute to the NADP(+) site. Residue H107 is part of the active site. Residue G133 participates in NADP(+) binding. One can recognise a KARI C-terminal knotted domain in the interval 182–327 (NFKNETETDL…AKLRNMMSWL (146 aa)). D190, E194, E226, and E230 together coordinate Mg(2+). Position 251 (S251) interacts with substrate.

The protein belongs to the ketol-acid reductoisomerase family. Mg(2+) serves as cofactor.

The enzyme catalyses (2R)-2,3-dihydroxy-3-methylbutanoate + NADP(+) = (2S)-2-acetolactate + NADPH + H(+). The catalysed reaction is (2R,3R)-2,3-dihydroxy-3-methylpentanoate + NADP(+) = (S)-2-ethyl-2-hydroxy-3-oxobutanoate + NADPH + H(+). The protein operates within amino-acid biosynthesis; L-isoleucine biosynthesis; L-isoleucine from 2-oxobutanoate: step 2/4. It functions in the pathway amino-acid biosynthesis; L-valine biosynthesis; L-valine from pyruvate: step 2/4. Involved in the biosynthesis of branched-chain amino acids (BCAA). Catalyzes an alkyl-migration followed by a ketol-acid reduction of (S)-2-acetolactate (S2AL) to yield (R)-2,3-dihydroxy-isovalerate. In the isomerase reaction, S2AL is rearranged via a Mg-dependent methyl migration to produce 3-hydroxy-3-methyl-2-ketobutyrate (HMKB). In the reductase reaction, this 2-ketoacid undergoes a metal-dependent reduction by NADPH to yield (R)-2,3-dihydroxy-isovalerate. This chain is Ketol-acid reductoisomerase (NADP(+)), found in Chlorobium chlorochromatii (strain CaD3).